The chain runs to 323 residues: Phospho-N-acetylmuramoyl-pentapeptide-transferase (323 aa).

9 helical membrane passes run 5-25 (SAVLTILSSFLITFLLMPSLI), 57-77 (LLFIFSAVVTILWVAAWQGLI), 81-101 (LWALLFVLVVYGLIGMWDDSI), 118-138 (LCQVLAAMVFTVIYQHEGFQM), 140-160 (FGTTQIGWLYGLFIIFWIVGF), 173-193 (LVSGLSIISFAAYLIIALVNL), 196-216 (PGYPEIALFCLAMIGTLLGFF), 225-247 (IFMGDMGSLAIGASLAAVSLLLH), and 302-322 (IVFWLVGLVAAIIAVTTILLV).

Belongs to the glycosyltransferase 4 family. MraY subfamily. It depends on Mg(2+) as a cofactor.

The protein localises to the cell membrane. It carries out the reaction UDP-N-acetyl-alpha-D-muramoyl-L-alanyl-gamma-D-glutamyl-L-lysyl-D-alanyl-D-alanine + di-trans,octa-cis-undecaprenyl phosphate = Mur2Ac(oyl-L-Ala-gamma-D-Glu-L-Lys-D-Ala-D-Ala)-di-trans,octa-cis-undecaprenyl diphosphate + UMP. It functions in the pathway cell wall biogenesis; peptidoglycan biosynthesis. Catalyzes the initial step of the lipid cycle reactions in the biosynthesis of the cell wall peptidoglycan: transfers peptidoglycan precursor phospho-MurNAc-pentapeptide from UDP-MurNAc-pentapeptide onto the lipid carrier undecaprenyl phosphate, yielding undecaprenyl-pyrophosphoryl-MurNAc-pentapeptide, known as lipid I. The polypeptide is Phospho-N-acetylmuramoyl-pentapeptide-transferase (Limosilactobacillus reuteri (strain DSM 20016) (Lactobacillus reuteri)).